The sequence spans 1131 residues: Filamin A-interacting protein 1-like (1131 aa).

Residues 1-62 (MRSRSSNAEG…KSHTGKGHHT (62 aa)) form a disordered region. The segment covering 50 to 62 (VSEKSHTGKGHHT) has biased composition (basic and acidic residues). Coiled coils occupy residues 139–583 (NELD…LSKV) and 610–780 (SKST…KSLR). Position 789 is a phosphoserine (serine 789). Phosphothreonine occurs at positions 984 and 992. Serine 1050 bears the Phosphoserine mark.

The protein belongs to the FILIP1 family.

Its subcellular location is the cytoplasm. The protein resides in the membrane. It is found in the nucleus. Functionally, acts as a regulator of the antiangiogenic activity on endothelial cells. When overexpressed in endothelial cells, leads to inhibition of cell proliferation and migration and an increase in apoptosis. Inhibits melanoma growth When expressed in tumor-associated vasculature. The chain is Filamin A-interacting protein 1-like (Filip1l) from Mus musculus (Mouse).